We begin with the raw amino-acid sequence, 284 residues long: Glutamate 5-kinase 2 (284 aa).

K26 lines the ATP pocket. Substrate contacts are provided by S67, D154, and N166. Residues 186 to 187 and 228 to 234 each bind ATP; these read SD and SGGMVTK.

The protein belongs to the glutamate 5-kinase family.

Its subcellular location is the cytoplasm. It carries out the reaction L-glutamate + ATP = L-glutamyl 5-phosphate + ADP. It functions in the pathway amino-acid biosynthesis; L-proline biosynthesis; L-glutamate 5-semialdehyde from L-glutamate: step 1/2. Its function is as follows. Catalyzes the transfer of a phosphate group to glutamate to form L-glutamate 5-phosphate. This is Glutamate 5-kinase 2 from Mesorhizobium japonicum (strain LMG 29417 / CECT 9101 / MAFF 303099) (Mesorhizobium loti (strain MAFF 303099)).